The sequence spans 607 residues: Aspartate--tRNA(Asp/Asn) ligase (607 aa).

Glu168 is an L-aspartate binding site. An aspartate region spans residues 192 to 195; the sequence is QLFK. Residue Arg214 participates in L-aspartate binding. ATP-binding positions include 214-216 and Gln223; that span reads RDE. His449 contributes to the L-aspartate binding site. Glu483 contacts ATP. Arg490 lines the L-aspartate pocket. 535 to 538 contributes to the ATP binding site; it reads GWDR. The segment at 578–607 is disordered; the sequence is LEAGVDARPKPEARAQAGTAGPAAPVADPT. The span at 580 to 590 shows a compositional bias: basic and acidic residues; it reads AGVDARPKPEA. A compositionally biased stretch (low complexity) spans 591-607; it reads RAQAGTAGPAAPVADPT.

It belongs to the class-II aminoacyl-tRNA synthetase family. Type 1 subfamily. In terms of assembly, homodimer.

The protein localises to the cytoplasm. It carries out the reaction tRNA(Asx) + L-aspartate + ATP = L-aspartyl-tRNA(Asx) + AMP + diphosphate. In terms of biological role, aspartyl-tRNA synthetase with relaxed tRNA specificity since it is able to aspartylate not only its cognate tRNA(Asp) but also tRNA(Asn). Reaction proceeds in two steps: L-aspartate is first activated by ATP to form Asp-AMP and then transferred to the acceptor end of tRNA(Asp/Asn). In Salinispora tropica (strain ATCC BAA-916 / DSM 44818 / JCM 13857 / NBRC 105044 / CNB-440), this protein is Aspartate--tRNA(Asp/Asn) ligase.